The chain runs to 844 residues: 3',5'-cyclic-AMP phosphodiesterase 4A (844 aa).

The tract at residues 1 to 124 (MEPPAAPSER…RSPLDSQASP (124 aa)) is disordered. S13 is modified (phosphoserine). Residues 36–46 (QPRTPIRIQQR) show a composition bias toward low complexity. Residues 51 to 78 (SAERSEPERSPHRPIERADAVDTGDRPG) are compositionally biased toward basic and acidic residues. Residues 82 to 91 (TRMSWPSSFH) are compositionally biased toward polar residues. S147, S152, S160, S204, and S333 each carry phosphoserine. A PDEase domain is found at 343-672 (VKTDQEDLLA…DWYHSAIRQS (330 aa)). K344 is covalently cross-linked (Glycyl lysine isopeptide (Lys-Gly) (interchain with G-Cter in SUMO)). The active-site Proton donor is H419. Residue H419 participates in 3',5'-cyclic AMP binding. Residues H419 and H423 each coordinate AMP. Zn(2+) is bound by residues H423, H459, D460, and D577. Residues D460, D577, Q628, and F631 each coordinate AMP. D460 provides a ligand contact to Mg(2+). A Mn(2+)-binding site is contributed by D460. 3',5'-cyclic AMP-binding residues include Q628 and F631. 2 positions are modified to phosphoserine: S672 and S674. A disordered region spans residues 819–844 (ACSGTSGDNSAVISAPGRWGSGGDPA). Residues 820-830 (CSGTSGDNSAV) are compositionally biased toward polar residues.

The protein belongs to the cyclic nucleotide phosphodiesterase family. PDE4 subfamily. As to quaternary structure, interacts with LYN (via SH3 domain). Interacts with ARRB2. Zn(2+) serves as cofactor. Requires Mg(2+) as cofactor. The cofactor is Mn(2+). Post-translationally, proteolytically cleaved by CASP3.

The protein localises to the cytoplasm. It localises to the cytosol. It is found in the membrane. It carries out the reaction 3',5'-cyclic AMP + H2O = AMP + H(+). It participates in purine metabolism; 3',5'-cyclic AMP degradation; AMP from 3',5'-cyclic AMP: step 1/1. With respect to regulation, inhibited by rolipram and diazepam. Its function is as follows. Hydrolyzes the second messenger 3',5'-cyclic AMP (cAMP), which is a key regulator of many important physiological processes. In terms of biological role, efficiently hydrolyzes cAMP. In Mus musculus (Mouse), this protein is 3',5'-cyclic-AMP phosphodiesterase 4A (Pde4a).